We begin with the raw amino-acid sequence, 311 residues long: Acetaldehyde dehydrogenase 2 (311 aa).

11-14 (SGNI) serves as a coordination point for NAD(+). C131 (acyl-thioester intermediate) is an active-site residue. Residues 162–170 (SAGPGTRAN) and N289 contribute to the NAD(+) site.

It belongs to the acetaldehyde dehydrogenase family.

The enzyme catalyses acetaldehyde + NAD(+) + CoA = acetyl-CoA + NADH + H(+). This Azotobacter vinelandii (strain DJ / ATCC BAA-1303) protein is Acetaldehyde dehydrogenase 2 (mhpF).